The chain runs to 1789 residues: Protein TIC 214 (1789 aa).

A run of 6 helical transmembrane segments spans residues 19–39, 68–88, 91–111, 133–153, 176–196, and 227–247; these read IINS…FSIG, FIAG…HLAL, PHTI…WNNH, VFLN…SSML, VGWL…LVWI, and IFSI…PSPI.

It belongs to the TIC214 family. Part of the Tic complex.

The protein resides in the plastid. Its subcellular location is the chloroplast inner membrane. Its function is as follows. Involved in protein precursor import into chloroplasts. May be part of an intermediate translocation complex acting as a protein-conducting channel at the inner envelope. The sequence is that of Protein TIC 214 from Capsella bursa-pastoris (Shepherd's purse).